Here is a 471-residue protein sequence, read N- to C-terminus: Trimethyllysine dioxygenase (471 aa).

Positions 251 and 253 each coordinate Fe cation. The segment at 272 to 302 (KAAPSRPPPPPPPPPPPSEEKEAAGSAAGEA) is disordered. Residues 276–288 (SRPPPPPPPPPPP) show a composition bias toward pro residues. H430 contributes to the Fe cation binding site.

This sequence belongs to the gamma-BBH/TMLD family. The cofactor is Fe(2+). Requires L-ascorbate as cofactor.

It is found in the cytoplasm. It carries out the reaction N(6),N(6),N(6)-trimethyl-L-lysine + 2-oxoglutarate + O2 = (3S)-3-hydroxy-N(6),N(6),N(6)-trimethyl-L-lysine + succinate + CO2. It participates in amine and polyamine biosynthesis; carnitine biosynthesis. In terms of biological role, converts trimethyllysine (TML) into hydroxytrimethyllysine (HTML). The sequence is that of Trimethyllysine dioxygenase (cbs-1) from Neurospora crassa (strain ATCC 24698 / 74-OR23-1A / CBS 708.71 / DSM 1257 / FGSC 987).